The following is a 302-amino-acid chain: Nucleotide-binding protein BceJ2315_08000 (302 aa).

8-15 (GISGSGKS) lines the ATP pocket. 57-60 (DARS) contributes to the GTP binding site.

It belongs to the RapZ-like family.

In terms of biological role, displays ATPase and GTPase activities. The sequence is that of Nucleotide-binding protein BceJ2315_08000 from Burkholderia cenocepacia (strain ATCC BAA-245 / DSM 16553 / LMG 16656 / NCTC 13227 / J2315 / CF5610) (Burkholderia cepacia (strain J2315)).